The sequence spans 541 residues: Atlastin-3 (541 aa).

The N-terminal hypervariable region (HVR) stretch occupies residues 1 to 25 (MLSPQRVAAAASRGADDAMESSKPG). Topologically, residues 1–445 (MLSPQRVAAA…NVFSTFRTPA (445 aa)) are cytoplasmic. The GB1/RHD3-type G domain occupies 57-305 (DLDVVVVSVA…LIPYVLNPSK (249 aa)). Positions 70, 71, 72, 73, 74, 75, and 109 each coordinate GDP. Mg(2+) is bound at residue aspartate 142. Positions 213, 214, 272, and 275 each coordinate GDP. The tract at residues 343–434 (MLQATAEANN…YENFCKHNGS (92 aa)) is 3HB (three-helix bundle) domain. Lysine 391 bears the N6-acetyllysine mark. A helical transmembrane segment spans residues 446 to 466 (VLFTGIVALYIASGLTGFIGL). Position 467 (glutamate 467) is a topological domain, lumenal. A helical membrane pass occupies residues 468–488 (VVAQLFNCMVGLLLIALLTWG). Over 489–541 (YIRYSGQYRELGGAIDFGAAYVLEQASSHIGNSTQATVRDAVVGRPSMDKKAQ) the chain is Cytoplasmic. Residue serine 535 is modified to Phosphoserine.

This sequence belongs to the TRAFAC class dynamin-like GTPase superfamily. GB1/RHD3 GTPase family. GB1 subfamily. In terms of assembly, monomeric and homodimeric. The homodimer, transiently formed by two molecules on opposing membranes, is the active form mediating ER membrane fusion. Interacts with ZFYVE27; both proteins are involved in endoplasmic reticulum tubular network organization. Interacts with REEP5; both proteins are involved in endoplasmic reticulum tubular network organization. In terms of tissue distribution, expressed in the central nervous system and in dorsal root ganglia neurons. Expressed in peripheral tissues (at protein level).

Its subcellular location is the endoplasmic reticulum membrane. It carries out the reaction GTP + H2O = GDP + phosphate + H(+). Functionally, atlastin-3 (ATL3) is a membrane-anchored GTPase that mediates the GTP-dependent fusion of endoplasmic reticulum (ER) membranes, maintaining the continuous ER network. It facilitates the formation of three-way junctions where ER tubules intersect. Two atlastin-3 on neighboring ER tubules bind GTP and form loose homodimers through the GB1/RHD3-type G domains and 3HB regions. Upon GTP hydrolysis, the 3HB regions tighten, pulling the membranes together to drive their fusion. After fusion, the homodimer disassembles upon release of inorganic phosphate (Pi). Subsequently, GDP dissociates, resetting the monomers to a conformation ready for a new fusion cycle. The polypeptide is Atlastin-3 (Homo sapiens (Human)).